A 155-amino-acid polypeptide reads, in one-letter code: Snaclec clone 2100755 (155 aa).

The N-terminal stretch at 1 to 23 (MGRFIFVSFGLLVVFLSLSGTAA) is a signal peptide. Disulfide bonds link cysteine 25-cysteine 36, cysteine 53-cysteine 144, and cysteine 119-cysteine 136. The C-type lectin domain occupies 32 to 145 (YDGHCYQVFS…CEKSVSFVCK (114 aa)).

The protein belongs to the snaclec family. Heterodimer; disulfide-linked.

It is found in the secreted. In terms of biological role, interferes with one step of hemostasis (modulation of platelet aggregation, or coagulation cascade, for example). The polypeptide is Snaclec clone 2100755 (Deinagkistrodon acutus (Hundred-pace snake)).